The primary structure comprises 198 residues: Peptidyl-tRNA hydrolase (198 aa).

Y15 lines the tRNA pocket. The active-site Proton acceptor is the H20. TRNA-binding residues include F65, N67, and N113.

Belongs to the PTH family. In terms of assembly, monomer.

It localises to the cytoplasm. It carries out the reaction an N-acyl-L-alpha-aminoacyl-tRNA + H2O = an N-acyl-L-amino acid + a tRNA + H(+). Its function is as follows. Hydrolyzes ribosome-free peptidyl-tRNAs (with 1 or more amino acids incorporated), which drop off the ribosome during protein synthesis, or as a result of ribosome stalling. Functionally, catalyzes the release of premature peptidyl moieties from peptidyl-tRNA molecules trapped in stalled 50S ribosomal subunits, and thus maintains levels of free tRNAs and 50S ribosomes. The protein is Peptidyl-tRNA hydrolase of Ehrlichia chaffeensis (strain ATCC CRL-10679 / Arkansas).